Here is a 272-residue protein sequence, read N- to C-terminus: Type III pantothenate kinase (272 aa).

6–13 provides a ligand contact to ATP; the sequence is DVRNTHTV. Substrate is bound at residue 109 to 112; that stretch reads GADR. The active-site Proton acceptor is the aspartate 111. Aspartate 131 is a K(+) binding site. Residue serine 134 participates in ATP binding. Threonine 186 provides a ligand contact to substrate.

This sequence belongs to the type III pantothenate kinase family. In terms of assembly, homodimer. NH4(+) serves as cofactor. K(+) is required as a cofactor.

It is found in the cytoplasm. It catalyses the reaction (R)-pantothenate + ATP = (R)-4'-phosphopantothenate + ADP + H(+). The protein operates within cofactor biosynthesis; coenzyme A biosynthesis; CoA from (R)-pantothenate: step 1/5. Catalyzes the phosphorylation of pantothenate (Pan), the first step in CoA biosynthesis. In Mycobacterium bovis (strain BCG / Pasteur 1173P2), this protein is Type III pantothenate kinase.